Reading from the N-terminus, the 160-residue chain is Large ribosomal subunit protein eL21B (160 aa).

A disordered region spans residues 114–140 (AKRKEAKAQGKTVQLRRQPAPPATAHF).

The protein belongs to the eukaryotic ribosomal protein eL21 family. As to quaternary structure, component of the large ribosomal subunit (LSU). Mature yeast ribosomes consist of a small (40S) and a large (60S) subunit. The 40S small subunit contains 1 molecule of ribosomal RNA (18S rRNA) and at least 33 different proteins. The large 60S subunit contains 3 rRNA molecules (25S, 5.8S and 5S rRNA) and at least 46 different proteins.

The protein localises to the cytoplasm. Its function is as follows. Component of the ribosome, a large ribonucleoprotein complex responsible for the synthesis of proteins in the cell. The small ribosomal subunit (SSU) binds messenger RNAs (mRNAs) and translates the encoded message by selecting cognate aminoacyl-transfer RNA (tRNA) molecules. The large subunit (LSU) contains the ribosomal catalytic site termed the peptidyl transferase center (PTC), which catalyzes the formation of peptide bonds, thereby polymerizing the amino acids delivered by tRNAs into a polypeptide chain. The nascent polypeptides leave the ribosome through a tunnel in the LSU and interact with protein factors that function in enzymatic processing, targeting, and the membrane insertion of nascent chains at the exit of the ribosomal tunnel. The chain is Large ribosomal subunit protein eL21B (rpl2102) from Schizosaccharomyces pombe (strain 972 / ATCC 24843) (Fission yeast).